The primary structure comprises 273 residues: Patr class II histocompatibility antigen, DO beta chain (273 aa).

Positions 1–26 are cleaved as a signal peptide; that stretch reads MGSGWVPWVVALLVNLTRLDSSMTQG. Residues 27–120 are beta-1; it reads TDSPEDFVIQ…LGAPFTVGRK (94 aa). Residues 27–224 are Extracellular-facing; it reads TDSPEDFVIQ…RAQSEYSWKK (198 aa). Intrachain disulfides connect C41/C105 and C143/C199. N-linked (GlcNAc...) asparagine glycosylation occurs at N45. Positions 121–214 are beta-2; that stretch reads VQPEVTVYPE…SLLSPVSVEW (94 aa). In terms of domain architecture, Ig-like C1-type spans 123–213; sequence PEVTVYPERT…SSLLSPVSVE (91 aa). A connecting peptide region spans residues 215–224; sequence RAQSEYSWKK. Residues 225-245 form a helical membrane-spanning segment; the sequence is MLSGIAAFLLGLIFLLVGIVI. Over 246–273 the chain is Cytoplasmic; it reads QLRAQKGYVRTQMSGNEVSRAVLLPQSC.

Belongs to the MHC class II family. Heterodimer of an alpha chain (DOA) and a beta chain (DOB). Forms a heterotetrameric complex with an HLA-DM molecule during intracellular transport in endosomal/lysosomal compartments in B-cells.

It is found in the endosome membrane. It localises to the lysosome membrane. Its function is as follows. Important modulator in the HLA class II restricted antigen presentation pathway by interaction with the HLA-DM molecule in B-cells. Modifies peptide exchange activity of HLA-DM. This is Patr class II histocompatibility antigen, DO beta chain (Patr-DOB) from Pan troglodytes (Chimpanzee).